The following is a 335-amino-acid chain: Beta-ketoacyl-[acyl-carrier-protein] synthase III (335 aa).

Residues Cys-116 and His-256 contribute to the active site. The interval 257–261 is ACP-binding; it reads QANLR. Asn-286 is a catalytic residue.

This sequence belongs to the thiolase-like superfamily. FabH family. As to quaternary structure, homodimer.

The protein localises to the cytoplasm. The catalysed reaction is malonyl-[ACP] + acetyl-CoA + H(+) = 3-oxobutanoyl-[ACP] + CO2 + CoA. Its pathway is lipid metabolism; fatty acid biosynthesis. In terms of biological role, catalyzes the condensation reaction of fatty acid synthesis by the addition to an acyl acceptor of two carbons from malonyl-ACP. Catalyzes the first condensation reaction which initiates fatty acid synthesis and may therefore play a role in governing the total rate of fatty acid production. Possesses both acetoacetyl-ACP synthase and acetyl transacylase activities. Its substrate specificity determines the biosynthesis of branched-chain and/or straight-chain of fatty acids. The sequence is that of Beta-ketoacyl-[acyl-carrier-protein] synthase III from Porphyromonas gingivalis (strain ATCC 33277 / DSM 20709 / CIP 103683 / JCM 12257 / NCTC 11834 / 2561).